A 312-amino-acid polypeptide reads, in one-letter code: Glyoxylate/hydroxypyruvate reductase A (312 aa).

Arginine 227 is a catalytic residue. Catalysis depends on histidine 275, which acts as the Proton donor.

This sequence belongs to the D-isomer specific 2-hydroxyacid dehydrogenase family. GhrA subfamily.

Its subcellular location is the cytoplasm. The enzyme catalyses glycolate + NADP(+) = glyoxylate + NADPH + H(+). The catalysed reaction is (R)-glycerate + NAD(+) = 3-hydroxypyruvate + NADH + H(+). It catalyses the reaction (R)-glycerate + NADP(+) = 3-hydroxypyruvate + NADPH + H(+). In terms of biological role, catalyzes the NADPH-dependent reduction of glyoxylate and hydroxypyruvate into glycolate and glycerate, respectively. Inactive towards 2-oxo-D-gluconate, 2-oxoglutarate, oxaloacetate and pyruvate. Only D- and L-glycerate are involved in the oxidative activity with NADP. Activity with NAD is very low. This Escherichia coli (strain K12) protein is Glyoxylate/hydroxypyruvate reductase A (ghrA).